The following is a 212-amino-acid chain: Methylthioribulose-1-phosphate dehydratase (212 aa).

Zn(2+)-binding residues include histidine 97 and histidine 99.

This sequence belongs to the aldolase class II family. MtnB subfamily. As to quaternary structure, homotetramer. Zn(2+) serves as cofactor.

The catalysed reaction is 5-(methylsulfanyl)-D-ribulose 1-phosphate = 5-methylsulfanyl-2,3-dioxopentyl phosphate + H2O. It participates in amino-acid biosynthesis; L-methionine biosynthesis via salvage pathway; L-methionine from S-methyl-5-thio-alpha-D-ribose 1-phosphate: step 2/6. Catalyzes the dehydration of methylthioribulose-1-phosphate (MTRu-1-P) into 2,3-diketo-5-methylthiopentyl-1-phosphate (DK-MTP-1-P). In Bacillus cytotoxicus (strain DSM 22905 / CIP 110041 / 391-98 / NVH 391-98), this protein is Methylthioribulose-1-phosphate dehydratase.